A 749-amino-acid polypeptide reads, in one-letter code: Sentrin-specific protease 5 (749 aa).

Over residues 268-279 the composition is skewed to basic and acidic residues; the sequence is TGDHQENLRDNN. 2 disordered regions span residues 268–288 and 394–440; these read TGDH…CNPV and QESG…EEDG. The protease stretch occupies residues 557-718; the sequence is FYNKHMLDMD…VFVLQYCKCL (162 aa). Catalysis depends on residues histidine 640, aspartate 657, and cysteine 707.

It belongs to the peptidase C48 family. In terms of assembly, interacts with CCAR2.

The protein localises to the nucleus. Its subcellular location is the nucleolus. Its function is as follows. Protease that catalyzes two essential functions in the SUMO pathway: processing of full-length SUMO3 to its mature form and deconjugation of SUMO2 and SUMO3 from targeted proteins. Has weak proteolytic activity against full-length SUMO1 or SUMO1 conjugates. Required for cell division. This chain is Sentrin-specific protease 5 (Senp5), found in Mus musculus (Mouse).